The primary structure comprises 519 residues: Ribonuclease Y 1 (519 aa).

Residues 2–22 traverse the membrane as a helical segment; it reads IILYIILAIIAIVVGYCAGFF. The segment at 84–113 is disordered; the sequence is QKQEDRLLQREDSLDRKDNSFEKRENSLER. Residues 209–294 form the KH domain; it reads TITVVSLPND…EMVEKAKKEM (86 aa). The 94-residue stretch at 335–428 folds into the HD domain; sequence VLNHSIEVAN…VAAANSISAA (94 aa).

The protein belongs to the RNase Y family.

The protein resides in the cell membrane. Its function is as follows. Endoribonuclease that initiates mRNA decay. This is Ribonuclease Y 1 from Pediococcus pentosaceus (strain ATCC 25745 / CCUG 21536 / LMG 10740 / 183-1w).